A 144-amino-acid chain; its full sequence is Large ribosomal subunit protein uL15 (144 aa).

Residues 1–58 (MQLNDLRSAPGARREKLRPGRGIGSGLGKTGGRGHKGQTSRSGGKIAPGFEGGQQPLH) are disordered. Residues 21-31 (RGIGSGLGKTG) are compositionally biased toward gly residues.

This sequence belongs to the universal ribosomal protein uL15 family. Part of the 50S ribosomal subunit.

Binds to the 23S rRNA. The protein is Large ribosomal subunit protein uL15 of Azotobacter vinelandii (strain DJ / ATCC BAA-1303).